The chain runs to 361 residues: Phosphate acyltransferase (361 aa).

The tract at residues 342–361 is disordered; that stretch reads ADGAAAEQGPTPRRTAPRQT.

This sequence belongs to the PlsX family. Homodimer. Probably interacts with PlsY.

It localises to the cytoplasm. The enzyme catalyses a fatty acyl-[ACP] + phosphate = an acyl phosphate + holo-[ACP]. Its pathway is lipid metabolism; phospholipid metabolism. Catalyzes the reversible formation of acyl-phosphate (acyl-PO(4)) from acyl-[acyl-carrier-protein] (acyl-ACP). This enzyme utilizes acyl-ACP as fatty acyl donor, but not acyl-CoA. The protein is Phosphate acyltransferase of Anaeromyxobacter sp. (strain K).